Consider the following 439-residue polypeptide: Proline--tRNA ligase (439 aa).

It belongs to the class-II aminoacyl-tRNA synthetase family. ProS type 2 subfamily. Homodimer.

It localises to the cytoplasm. The catalysed reaction is tRNA(Pro) + L-proline + ATP = L-prolyl-tRNA(Pro) + AMP + diphosphate. In terms of biological role, catalyzes the attachment of proline to tRNA(Pro) in a two-step reaction: proline is first activated by ATP to form Pro-AMP and then transferred to the acceptor end of tRNA(Pro). The polypeptide is Proline--tRNA ligase (Rhodopseudomonas palustris (strain BisA53)).